The sequence spans 1146 residues: Integrin alpha-PS1 (1146 aa).

The first 30 residues, 1 to 30, serve as a signal peptide directing secretion; it reads MLELPFTTIRPNCRLRQNLGILIILQCVLT. The Extracellular segment spans residues 31 to 1085; that stretch reads CYNFNLEQRL…NQQRDTSIPW (1055 aa). FG-GAP repeat units lie at residues 38 to 105, 121 to 186, 193 to 245, 254 to 303, 304 to 366, 367 to 422, and 432 to 494; these read QRLP…FDDC, LSPP…FEEV, RPVQ…YLQR, HSDL…KSTD, NPIP…TLPM, KYTL…GLNS, and ELGG…RKEL. N-linked (GlcNAc...) asparagine glycosylation is found at asparagine 68, asparagine 86, and asparagine 147. Asparagine 470, asparagine 511, asparagine 657, asparagine 680, asparagine 711, asparagine 718, asparagine 761, and asparagine 928 each carry an N-linked (GlcNAc...) asparagine glycan. Positions 938–958 are disordered; it reads YYSSSHRDDHSDDTQSNRNRV. The span at 942–952 shows a compositional bias: basic and acidic residues; the sequence is SHRDDHSDDTQ. Residue asparagine 1027 is glycosylated (N-linked (GlcNAc...) asparagine). The helical transmembrane segment at 1086-1106 threads the bilayer; that stretch reads LIIILGIVGGLLLLALVTYVL. Residues 1107–1146 lie on the Cytoplasmic side of the membrane; sequence WKVGFFKRIRPTDPTLSGNLEKMNEEKPFLAPSKNTHHVF.

It belongs to the integrin alpha chain family. In terms of assembly, heterodimer of an alpha and a beta subunit. The alpha subunit is composed of a heavy and a light chain linked by a disulfide bond. Alpha-PS1 associates with beta-PS. As to expression, expressed in follicle cells (at protein level). At syncytial blastoderm stage, expressed in the ectoderm but not in the mesodermal precursors. At embryonic stage 7, expressed in dorsal and ventrolateral ectoderm and in some yolk nuclei. At late stage 10, expression is homogeneous in the ectoderm and is particularly abundant in the anterior and posterior midgut primordia. At stage 11, strongly expressed in a metameric pattern in the ectoderm, in the proctodeum and in the posterior midgut primordium. At stage 12, accumulates at the segment boundaries that start to become morphologically visible, similar expression pattern is observed in the central nervous system. In third larval instar wing imaginal disk, strongly expressed in the dorsal compartment, in the adepithelial cells and in patches on the peripodial membrane covering the imaginal disk to the outside.

It is found in the apical cell membrane. It localises to the lateral cell membrane. The protein resides in the basal cell membrane. Functionally, integrin alpha-PS1/beta-PS is a receptor for laminin. The chain is Integrin alpha-PS1 (mew) from Drosophila melanogaster (Fruit fly).